The chain runs to 878 residues: Aminopeptidase M1-C (878 aa).

The interval 102 to 209 is required for membrane association; the sequence is LGEGVLAMDF…MSTYLVAIVV (108 aa). Substrate is bound by residues glutamate 142 and 275-279; that span reads GAMEN. A Zn(2+)-binding site is contributed by histidine 311. The Proton acceptor role is filled by glutamate 312. Zn(2+) contacts are provided by histidine 315 and glutamate 334. The Dileucine internalization motif motif lies at 726-727; that stretch reads LL.

It belongs to the peptidase M1 family. In terms of assembly, homodimer. Zn(2+) serves as cofactor.

Its subcellular location is the membrane. The protein localises to the microsome membrane. It localises to the cytoplasm. The enzyme catalyses Release of an N-terminal amino acid, Xaa-|-Yaa- from a peptide, amide or arylamide. Xaa is preferably Ala, but may be most amino acids including Pro (slow action). When a terminal hydrophobic residue is followed by a prolyl residue, the two may be released as an intact Xaa-Pro dipeptide.. This is Aminopeptidase M1-C from Oryza sativa subsp. japonica (Rice).